The primary structure comprises 366 residues: Chorismate synthase (366 aa).

NADP(+) is bound by residues arginine 48 and arginine 54. Residues arginine 125–serine 127, asparagine 238–alanine 239, glycine 278, lysine 293–serine 297, and arginine 319 contribute to the FMN site.

This sequence belongs to the chorismate synthase family. Homotetramer. It depends on FMNH2 as a cofactor.

It catalyses the reaction 5-O-(1-carboxyvinyl)-3-phosphoshikimate = chorismate + phosphate. It participates in metabolic intermediate biosynthesis; chorismate biosynthesis; chorismate from D-erythrose 4-phosphate and phosphoenolpyruvate: step 7/7. Catalyzes the anti-1,4-elimination of the C-3 phosphate and the C-6 proR hydrogen from 5-enolpyruvylshikimate-3-phosphate (EPSP) to yield chorismate, which is the branch point compound that serves as the starting substrate for the three terminal pathways of aromatic amino acid biosynthesis. This reaction introduces a second double bond into the aromatic ring system. This is Chorismate synthase from Pseudoalteromonas atlantica (strain T6c / ATCC BAA-1087).